The following is a 36-amino-acid chain: Potassium channel toxin alpha-KTx 16.5 (36 aa).

Disulfide bonds link C7–C28, C13–C33, and C17–C35. An interaction with Ca(2+)-activated K(+) channels region spans residues 26-33 (GKCQNKQC).

This sequence belongs to the short scorpion toxin superfamily. Potassium channel inhibitor family. Alpha-KTx 16 subfamily. In terms of tissue distribution, expressed by the venom gland.

It localises to the secreted. Augments responses to direct muscle stimulation probably by blocking calcium-activated potassium channels. The polypeptide is Potassium channel toxin alpha-KTx 16.5 (Leiurus hebraeus (Hebrew deathstalker scorpion)).